The sequence spans 1188 residues: DNA polymerase (1188 aa).

The tract at residues 1–74 (MALVPSPRAG…PAANNVSLTP (74 aa)) is disordered. Over residues 31-41 (STAGAAPTATR) the composition is skewed to low complexity.

Belongs to the DNA polymerase type-B family. As to quaternary structure, heterodimer with the terminal protein; this heterodimer binds to bp 9 to 18 of the genome. Forms a complex with viral pTP, DBP and hosts NFIA and POU2F1/OCT1 for initiation of replication.

The protein resides in the host nucleus. The catalysed reaction is DNA(n) + a 2'-deoxyribonucleoside 5'-triphosphate = DNA(n+1) + diphosphate. Eukaryotic-type DNA polymerase involved in viral genomic replication. DNA synthesis is protein primed, and acts in a strand displacement replication. Assembles in complex with viral pTP, DBP, host NFIA and host POU2F1/OCT1 on viral origin of replication. The polymerase covalently transfers dCMP onto pTP, thereby initiating complementary strand synthesis. This chain is DNA polymerase, found in Human adenovirus F serotype 40 (HAdV-40).